The chain runs to 629 residues: DNA mismatch repair protein MutL (629 aa).

Belongs to the DNA mismatch repair MutL/HexB family.

This protein is involved in the repair of mismatches in DNA. It is required for dam-dependent methyl-directed DNA mismatch repair. May act as a 'molecular matchmaker', a protein that promotes the formation of a stable complex between two or more DNA-binding proteins in an ATP-dependent manner without itself being part of a final effector complex. This chain is DNA mismatch repair protein MutL, found in Haemophilus influenzae (strain 86-028NP).